The sequence spans 512 residues: Cytochrome P450 1A1 (512 aa).

Residues 29-40 (SRPQVPKGLKNP) are mitochondrial targeting signal. An O-linked (GlcNAc) serine glycan is attached at Ser67. Phe224 is a binding site for substrate. Cys457 contacts heme.

This sequence belongs to the cytochrome P450 family. In terms of assembly, interacts with cytosolic chaperones HSP70 and HSP90; this interaction is required for initial targeting to mitochondria. Interacts (via mitochondrial targeting signal) with TOMM40 (via N-terminus); this interaction is required for translocation across the mitochondrial outer membrane. Heme serves as cofactor. Lung, lymphocytes and placenta.

Its subcellular location is the endoplasmic reticulum membrane. The protein localises to the mitochondrion inner membrane. The protein resides in the microsome membrane. It is found in the cytoplasm. It catalyses the reaction an organic molecule + reduced [NADPH--hemoprotein reductase] + O2 = an alcohol + oxidized [NADPH--hemoprotein reductase] + H2O + H(+). It carries out the reaction estrone + reduced [NADPH--hemoprotein reductase] + O2 = 2-hydroxyestrone + oxidized [NADPH--hemoprotein reductase] + H2O + H(+). The enzyme catalyses estrone + reduced [NADPH--hemoprotein reductase] + O2 = 4-hydroxyestrone + oxidized [NADPH--hemoprotein reductase] + H2O + H(+). The catalysed reaction is estrone + reduced [NADPH--hemoprotein reductase] + O2 = 6alpha-hydroxyestrone + oxidized [NADPH--hemoprotein reductase] + H2O + H(+). It catalyses the reaction estrone + reduced [NADPH--hemoprotein reductase] + O2 = 15alpha-hydroxyestrone + oxidized [NADPH--hemoprotein reductase] + H2O + H(+). It carries out the reaction estrone + reduced [NADPH--hemoprotein reductase] + O2 = 16alpha-hydroxyestrone + oxidized [NADPH--hemoprotein reductase] + H2O + H(+). The enzyme catalyses 17beta-estradiol + reduced [NADPH--hemoprotein reductase] + O2 = 2-hydroxy-17beta-estradiol + oxidized [NADPH--hemoprotein reductase] + H2O + H(+). The catalysed reaction is 17beta-estradiol + reduced [NADPH--hemoprotein reductase] + O2 = 4-hydroxy-17beta-estradiol + oxidized [NADPH--hemoprotein reductase] + H2O + H(+). It catalyses the reaction 17beta-estradiol + reduced [NADPH--hemoprotein reductase] + O2 = 6alpha-hydroxy-17beta-estradiol + oxidized [NADPH--hemoprotein reductase] + H2O + H(+). It carries out the reaction 17beta-estradiol + reduced [NADPH--hemoprotein reductase] + O2 = 7alpha-hydroxy-17beta-estradiol + oxidized [NADPH--hemoprotein reductase] + H2O + H(+). The enzyme catalyses 17beta-estradiol + reduced [NADPH--hemoprotein reductase] + O2 = 15alpha-hydroxy-17beta-estradiol + oxidized [NADPH--hemoprotein reductase] + H2O + H(+). The catalysed reaction is (5Z,8Z,11Z)-eicosatrienoate + reduced [NADPH--hemoprotein reductase] + O2 = 19-hydroxy-(5Z,8Z,11Z)-eicosatrienoate + oxidized [NADPH--hemoprotein reductase] + H2O + H(+). It catalyses the reaction (5Z,8Z,11Z,14Z)-eicosatetraenoate + reduced [NADPH--hemoprotein reductase] + O2 = 16-hydroxy-(5Z,8Z,11Z,14Z)-eicosatetraenoate + oxidized [NADPH--hemoprotein reductase] + H2O + H(+). It carries out the reaction (5Z,8Z,11Z,14Z)-eicosatetraenoate + reduced [NADPH--hemoprotein reductase] + O2 = 17-hydroxy-(5Z,8Z,11Z,14Z)-eicosatetraenoate + oxidized [NADPH--hemoprotein reductase] + H2O + H(+). The enzyme catalyses (5Z,8Z,11Z,14Z)-eicosatetraenoate + reduced [NADPH--hemoprotein reductase] + O2 = 18-hydroxy-(5Z,8Z,11Z,14Z)-eicosatetraenoate + oxidized [NADPH--hemoprotein reductase] + H2O + H(+). The catalysed reaction is (5Z,8Z,11Z,14Z)-eicosatetraenoate + reduced [NADPH--hemoprotein reductase] + O2 = 19-hydroxy-(5Z,8Z,11Z,14Z)-eicosatetraenoate + oxidized [NADPH--hemoprotein reductase] + H2O + H(+). It catalyses the reaction (5Z,8Z,11Z,14Z,17Z)-eicosapentaenoate + reduced [NADPH--hemoprotein reductase] + O2 = 19-hydroxy-(5Z,8Z,11Z,14Z,17Z)-eicosapentaenoate + oxidized [NADPH--hemoprotein reductase] + H2O + H(+). It carries out the reaction (5Z,8Z,11Z,14Z)-eicosatetraenoate + reduced [NADPH--hemoprotein reductase] + O2 = (8R,9S)-epoxy-(5Z,11Z,14Z)-eicosatrienoate + oxidized [NADPH--hemoprotein reductase] + H2O + H(+). The enzyme catalyses (5Z,8Z,11Z,14Z)-eicosatetraenoate + reduced [NADPH--hemoprotein reductase] + O2 = (11R,12S)-epoxy-(5Z,8Z,14Z)-eicosatrienoate + oxidized [NADPH--hemoprotein reductase] + H2O + H(+). The catalysed reaction is (5Z,8Z,11Z,14Z)-eicosatetraenoate + reduced [NADPH--hemoprotein reductase] + O2 = (14S,15R)-epoxy-(5Z,8Z,11Z)-eicosatrienoate + oxidized [NADPH--hemoprotein reductase] + H2O + H(+). It catalyses the reaction (5Z,8Z,11Z,14Z)-eicosatetraenoate + reduced [NADPH--hemoprotein reductase] + O2 = (14R,15S)-epoxy-(5Z,8Z,11Z)-eicosatrienoate + oxidized [NADPH--hemoprotein reductase] + H2O + H(+). It carries out the reaction (5Z,8Z,11Z,14Z,17Z)-eicosapentaenoate + reduced [NADPH--hemoprotein reductase] + O2 = (17R,18S)-epoxy-(5Z,8Z,11Z,14Z)-eicosatetraenoate + oxidized [NADPH--hemoprotein reductase] + H2O + H(+). The enzyme catalyses (4Z,7Z,10Z,13Z,16Z,19Z)-docosahexaenoate + reduced [NADPH--hemoprotein reductase] + O2 = (19S,20R)-epoxy-(4Z,7Z,10Z,13Z,16Z)-docosapentaenoate + oxidized [NADPH--hemoprotein reductase] + H2O + H(+). The catalysed reaction is (4Z,7Z,10Z,13Z,16Z,19Z)-docosahexaenoate + reduced [NADPH--hemoprotein reductase] + O2 = (19R,20S)-epoxy-(4Z,7Z,10Z,13Z,16Z)-docosapentaenoate + oxidized [NADPH--hemoprotein reductase] + H2O + H(+). It catalyses the reaction all-trans-retinol + reduced [NADPH--hemoprotein reductase] + O2 = all-trans-retinal + oxidized [NADPH--hemoprotein reductase] + 2 H2O + H(+). It carries out the reaction all-trans-retinal + reduced [NADPH--hemoprotein reductase] + O2 = all-trans-retinoate + oxidized [NADPH--hemoprotein reductase] + H2O + 2 H(+). The enzyme catalyses (13S)-hydroperoxy-(9Z,11E)-octadecadienoate = 13-oxo-(9Z,11E)-octadecadienoate + H2O. The catalysed reaction is (12S)-hydroperoxy-(5Z,8Z,10E,14Z)-eicosatetraenoate = 12-oxo-(5Z,8Z,10E,14Z)-eicosatetraenoate + H2O. It catalyses the reaction (15S)-hydroperoxy-(5Z,8Z,11Z,13E)-eicosatetraenoate = 15-oxo-(5Z,8Z,11Z,13E)-eicosatetraenoate + H2O. It carries out the reaction (5S)-hydroperoxy-(6E,8Z,11Z,14Z)-eicosatetraenoate = 5-oxo-(6E,8Z,11Z,14Z)-eicosatetraenoate + H2O. Its pathway is steroid hormone biosynthesis. It participates in lipid metabolism; fatty acid metabolism. It functions in the pathway cofactor metabolism; retinol metabolism. In terms of biological role, a cytochrome P450 monooxygenase involved in the metabolism of various endogenous substrates, including fatty acids, steroid hormones and vitamins. Mechanistically, uses molecular oxygen inserting one oxygen atom into a substrate, and reducing the second into a water molecule, with two electrons provided by NADPH via cytochrome P450 reductase (NADPH--hemoprotein reductase). Catalyzes the hydroxylation of carbon-hydrogen bonds. Exhibits high catalytic activity for the formation of hydroxyestrogens from estrone (E1) and 17beta-estradiol (E2), namely 2-hydroxy E1 and E2, as well as D-ring hydroxylated E1 and E2 at the C15-alpha and C16-alpha positions. Displays different regioselectivities for polyunsaturated fatty acids (PUFA) hydroxylation. Catalyzes the epoxidation of double bonds of certain PUFA. Converts arachidonic acid toward epoxyeicosatrienoic acid (EET) regioisomers, 8,9-, 11,12-, and 14,15-EET, that function as lipid mediators in the vascular system. Displays an absolute stereoselectivity in the epoxidation of eicosapentaenoic acid (EPA) producing the 17(R),18(S) enantiomer. May play an important role in all-trans retinoic acid biosynthesis in extrahepatic tissues. Catalyzes two successive oxidative transformation of all-trans retinol to all-trans retinal and then to the active form all-trans retinoic acid. May also participate in eicosanoids metabolism by converting hydroperoxide species into oxo metabolites (lipoxygenase-like reaction, NADPH-independent). The chain is Cytochrome P450 1A1 from Homo sapiens (Human).